Reading from the N-terminus, the 379-residue chain is Structure-specific endonuclease subunit EME2 (379 aa).

Positions M1–G55 are disordered. The nuclease-like domain; forms the post-nick DNA binding interface and is involved in DNA recognition and bending stretch occupies residues A50–Q266. The interval G288–S379 is helix-hairpin-helix (2HhH); forms the pre-nick DNA binding interface and is involved in DNA recognition and bending.

The protein belongs to the EME1/MMS4 family. Part of the heterodimeric MUS81-EME2 complex; the complex forms specifically during the DNA replication phase of the cell cycle.

Its subcellular location is the nucleus. Its function is as follows. Non-catalytic subunit of the structure-specific, heterodimeric DNA endonuclease MUS81-EME2 which is involved in the maintenance of genome stability. In the complex, EME2 is required for DNA cleavage, participating in DNA recognition and bending. MUS81-EME2 cleaves 3'-flaps and nicked Holliday junctions, and exhibit limited endonuclease activity with 5' flaps and nicked double-stranded DNAs. MUS81-EME2 which is active during the replication of DNA is more specifically involved in replication fork processing. Replication forks frequently encounter obstacles to their passage, including DNA base lesions, DNA interstrand cross-links, difficult-to-replicate sequences, transcription bubbles, or tightly bound proteins. One mechanism for the restart of a stalled replication fork involves nucleolytic cleavage mediated by the MUS81-EME2 endonuclease. By acting upon the stalled fork, MUS81-EME2 generates a DNA double-strand break (DSB) that can be repaired by homologous recombination, leading to the restoration of an active fork. MUS81-EME2 could also function in telomere maintenance. This Homo sapiens (Human) protein is Structure-specific endonuclease subunit EME2.